Reading from the N-terminus, the 295-residue chain is Acetyl-coenzyme A carboxylase carboxyl transferase subunit beta (295 aa).

The disordered stretch occupies residues Met1–Lys20. A CoA carboxyltransferase N-terminal domain is found at Leu28 to Ala295. The Zn(2+) site is built by Cys32, Cys35, Cys51, and Cys54. The C4-type zinc-finger motif lies at Cys32–Cys54.

Belongs to the AccD/PCCB family. Acetyl-CoA carboxylase is a heterohexamer composed of biotin carboxyl carrier protein (AccB), biotin carboxylase (AccC) and two subunits each of ACCase subunit alpha (AccA) and ACCase subunit beta (AccD). Zn(2+) serves as cofactor.

It localises to the cytoplasm. The enzyme catalyses N(6)-carboxybiotinyl-L-lysyl-[protein] + acetyl-CoA = N(6)-biotinyl-L-lysyl-[protein] + malonyl-CoA. The protein operates within lipid metabolism; malonyl-CoA biosynthesis; malonyl-CoA from acetyl-CoA: step 1/1. Component of the acetyl coenzyme A carboxylase (ACC) complex. Biotin carboxylase (BC) catalyzes the carboxylation of biotin on its carrier protein (BCCP) and then the CO(2) group is transferred by the transcarboxylase to acetyl-CoA to form malonyl-CoA. This Xanthomonas euvesicatoria pv. vesicatoria (strain 85-10) (Xanthomonas campestris pv. vesicatoria) protein is Acetyl-coenzyme A carboxylase carboxyl transferase subunit beta.